The sequence spans 87 residues: Toxin ICK-42 (87 aa).

An N-terminal signal peptide occupies residues 1-19 (MKPIVYMLLFCAFTVVILG). 4 disulfide bridges follow: cysteine 40/cysteine 54, cysteine 40/cysteine 77, cysteine 53/cysteine 66, and cysteine 80/cysteine 87.

This sequence belongs to the neurotoxin 27 (Jztx-72) family. ICK-41 subfamily. Expressed by the venom gland.

It localises to the secreted. Functionally, probable neurotoxin with ion channel impairing activity. The chain is Toxin ICK-42 from Trittame loki (Brush-footed trapdoor spider).